The primary structure comprises 383 residues: Alanine racemase (383 aa).

Residue Lys-50 is the Proton acceptor; specific for D-alanine of the active site. Lys-50 carries the N6-(pyridoxal phosphate)lysine modification. Arg-151 serves as a coordination point for substrate. The active-site Proton acceptor; specific for L-alanine is the Tyr-279. Met-327 is a substrate binding site.

Belongs to the alanine racemase family. Pyridoxal 5'-phosphate serves as cofactor.

The catalysed reaction is L-alanine = D-alanine. The protein operates within amino-acid biosynthesis; D-alanine biosynthesis; D-alanine from L-alanine: step 1/1. Functionally, catalyzes the interconversion of L-alanine and D-alanine. May also act on other amino acids. The sequence is that of Alanine racemase (alr) from Chlorobaculum tepidum (strain ATCC 49652 / DSM 12025 / NBRC 103806 / TLS) (Chlorobium tepidum).